The following is a 213-amino-acid chain: Adenylate kinase (213 aa).

10–15 (GAGKGT) lines the ATP pocket. Positions 30-59 (STGDMLRAALKEGTPLGLEAKKYMDQGALV) are NMP. Residues T31, R36, 57 to 59 (ALV), 85 to 88 (GFPR), and Q92 each bind AMP. Residues 126 to 163 (GRRTCRSCGAGFHVMFDPPKTDGKCDKCGGELYQRDDD) form an LID region. R127 contacts ATP. Zn(2+) is bound by residues C130, C133, C150, and C153. The AMP site is built by R160 and R171. Residue G199 participates in ATP binding.

The protein belongs to the adenylate kinase family. Monomer.

It is found in the cytoplasm. It carries out the reaction AMP + ATP = 2 ADP. Its pathway is purine metabolism; AMP biosynthesis via salvage pathway; AMP from ADP: step 1/1. Its function is as follows. Catalyzes the reversible transfer of the terminal phosphate group between ATP and AMP. Plays an important role in cellular energy homeostasis and in adenine nucleotide metabolism. This Syntrophobacter fumaroxidans (strain DSM 10017 / MPOB) protein is Adenylate kinase.